A 1033-amino-acid polypeptide reads, in one-letter code: Tyrosine-protein kinase-like otk (1033 aa).

Residues 1-22 (MTARMISIYGLVLASMMASVLA) form the signal peptide. The Extracellular portion of the chain corresponds to 23–581 (SSSRFQRLPQ…GGDGFLVTRA (559 aa)). Ig-like C2-type domains lie at 25–114 (SRFQ…AKLS), 113–199 (LSVI…RVMS), 251–365 (PEDL…VPVS), 368–463 (PGVL…VAIN), and 468–558 (PKFS…VQLI). N-linked (GlcNAc...) asparagine glycosylation occurs at Asn-39. Cystine bridges form between Cys-46-Cys-95, Cys-137-Cys-188, Cys-276-Cys-354, and Cys-399-Cys-447. N-linked (GlcNAc...) asparagine glycosylation is found at Asn-336, Asn-417, Asn-429, Asn-444, Asn-457, Asn-512, and Asn-524. Residues Cys-490 and Cys-542 are joined by a disulfide bond. A helical membrane pass occupies residues 582 to 602 (VLITMTVALAYIVLVVGLMLW). At 603–1033 (CRYRRQARKA…LSKAMQSAEK (431 aa)) the chain is on the cytoplasmic side. 2 disordered regions span residues 617–679 (LSTK…KKSA) and 718–760 (SPSD…KTSM). Over residues 655–673 (KSSGDAQKSDDTACSQQSR) the composition is skewed to polar residues. Residue Ser-678 is modified to Phosphoserine. The region spanning 692-1028 (LSELIQIGRG…QLGAALSKAM (337 aa)) is the Protein kinase; inactive domain. A compositionally biased stretch (basic and acidic residues) spans 720–731 (SDKDADTEKQHS).

Belongs to the protein kinase superfamily. Tyr protein kinase family. Insulin receptor subfamily. As to quaternary structure, interacts with plexA; component of a receptor complex that mediates the repulsive signaling in response to Semaphorin ligands.

It is found in the cell membrane. Acts as a calcium-dependent, homophilic cell adhesion molecule that regulates neural recognition during the development of the nervous system. Component of the repulsive Plexin signaling response to regulate motor axon guidance at the embryonic stage. Also component of a receptor complex that is required in the adult visual system to innervate the lamina layer; specific targeting of R1-R6 axons. The chain is Tyrosine-protein kinase-like otk from Drosophila yakuba (Fruit fly).